The primary structure comprises 100 residues: Urease subunit gamma (100 aa).

This sequence belongs to the urease gamma subunit family. In terms of assembly, heterotrimer of UreA (gamma), UreB (beta) and UreC (alpha) subunits. Three heterotrimers associate to form the active enzyme.

Its subcellular location is the cytoplasm. The enzyme catalyses urea + 2 H2O + H(+) = hydrogencarbonate + 2 NH4(+). The protein operates within nitrogen metabolism; urea degradation; CO(2) and NH(3) from urea (urease route): step 1/1. In Nostoc punctiforme (strain ATCC 29133 / PCC 73102), this protein is Urease subunit gamma.